The chain runs to 463 residues: Endoglucanase EG-1 (463 aa).

The first 22 residues, 1-22 (MAPSATLPLTTAILAIGRLVAA), serve as a signal peptide directing secretion. Positions 23-397 (QQPGTSTPEV…DIGSTTNSTG (375 aa)) are catalytic. N-linked (GlcNAc...) asparagine glycans are attached at residues Asn78, Asn164, Asn204, and Asn208. Glu218 functions as the Nucleophile in the catalytic mechanism. Catalysis depends on Glu223, which acts as the Proton donor. Residues 390–429 (GSTTNSTGGNPPPPPPPASSTTFSTTRRSSTTSSSPSCTQ) are disordered. Asn394 carries an N-linked (GlcNAc...) asparagine glycan. The interval 402 to 427 (PPPPPASSTTFSTTRRSSTTSSSPSC) is linker. Residues 408-429 (SSTTFSTTRRSSTTSSSPSCTQ) are compositionally biased toward low complexity. The 37-residue stretch at 427–463 (CTQTHWGQCGGIGYTGCKTCTSGTTCQYGNDYYSQCL) folds into the CBM1 domain. Disulfide bonds link Cys435–Cys452 and Cys446–Cys462.

The protein belongs to the glycosyl hydrolase 7 (cellulase C) family.

Its subcellular location is the secreted. The catalysed reaction is Endohydrolysis of (1-&gt;4)-beta-D-glucosidic linkages in cellulose, lichenin and cereal beta-D-glucans.. In terms of biological role, the biological conversion of cellulose to glucose generally requires three types of hydrolytic enzymes: (1) Endoglucanases which cut internal beta-1,4-glucosidic bonds; (2) Exocellobiohydrolases that cut the disaccharide cellobiose from the non-reducing end of the cellulose polymer chain; (3) Beta-1,4-glucosidases which hydrolyze the cellobiose and other short cello-oligosaccharides to glucose. The protein is Endoglucanase EG-1 (egl1) of Trichoderma longibrachiatum.